Here is a 391-residue protein sequence, read N- to C-terminus: UPF0229 protein CLL_A3091 (391 aa).

Disordered stretches follow at residues 1-23 (MAIF…DKRR) and 75-107 (VATG…GNEE). The span at 80-92 (GEEKRGDKIESGS) shows a compositional bias: basic and acidic residues.

This sequence belongs to the UPF0229 family.

In Clostridium botulinum (strain Eklund 17B / Type B), this protein is UPF0229 protein CLL_A3091.